Reading from the N-terminus, the 299-residue chain is 4-diphosphocytidyl-2-C-methyl-D-erythritol kinase (299 aa).

The active site involves Lys11. Residue 94 to 104 (PQGGGLGGGSS) participates in ATP binding. Asp136 is an active-site residue.

Belongs to the GHMP kinase family. IspE subfamily.

It catalyses the reaction 4-CDP-2-C-methyl-D-erythritol + ATP = 4-CDP-2-C-methyl-D-erythritol 2-phosphate + ADP + H(+). Its pathway is isoprenoid biosynthesis; isopentenyl diphosphate biosynthesis via DXP pathway; isopentenyl diphosphate from 1-deoxy-D-xylulose 5-phosphate: step 3/6. Functionally, catalyzes the phosphorylation of the position 2 hydroxy group of 4-diphosphocytidyl-2C-methyl-D-erythritol. This chain is 4-diphosphocytidyl-2-C-methyl-D-erythritol kinase, found in Bordetella bronchiseptica (strain ATCC BAA-588 / NCTC 13252 / RB50) (Alcaligenes bronchisepticus).